Reading from the N-terminus, the 435-residue chain is 5-hydroxybenzimidazole synthase (435 aa).

Substrate contacts are provided by residues Met-95, Tyr-124, His-163, 186-188 (SKG), 227-230 (NGLR), and Glu-266. His-270 serves as a coordination point for Zn(2+). Position 293 (Tyr-293) interacts with substrate. His-334 is a Zn(2+) binding site. [4Fe-4S] cluster contacts are provided by Cys-410, Cys-413, and Cys-417.

This sequence belongs to the ThiC family. 5-hydroxybenzimidazole synthase subfamily. As to quaternary structure, homodimer. [4Fe-4S] cluster serves as cofactor.

It catalyses the reaction 5-amino-1-(5-phospho-beta-D-ribosyl)imidazole + AH2 + S-adenosyl-L-methionine = 5-hydroxybenzimidazole + 5'-deoxyadenosine + formate + L-methionine + A + NH4(+) + phosphate + 2 H(+). Its pathway is cofactor biosynthesis; adenosylcobalamin biosynthesis. Functionally, catalyzes the complex conversion of aminoimidazole ribotide (AIR) to 5-hydroxybenzimidazole (5-HBI) in a radical S-adenosyl-L-methionine (SAM)-dependent reaction. Is thus involved in the anaerobic biosynthesis of dimethylbenzimidazole (DMB), the lower axial ligand of vitamin B12 (cobalamin). This Desulfuromonas acetoxidans (strain DSM 684 / 11070) protein is 5-hydroxybenzimidazole synthase.